Consider the following 225-residue polypeptide: Probable GTP-binding protein EngB (225 aa).

The region spanning 31–204 (VGVEIAFAGR…LGILDSWCKP (174 aa)) is the EngB-type G domain. Residues 39 to 46 (GRSNAGKS), 65 to 69 (GRTQL), 83 to 86 (DLPG), 150 to 153 (TKAD), and 183 to 185 (FSS) each bind GTP. S46 and T67 together coordinate Mg(2+).

The protein belongs to the TRAFAC class TrmE-Era-EngA-EngB-Septin-like GTPase superfamily. EngB GTPase family. It depends on Mg(2+) as a cofactor.

Its function is as follows. Necessary for normal cell division and for the maintenance of normal septation. The sequence is that of Probable GTP-binding protein EngB from Shewanella pealeana (strain ATCC 700345 / ANG-SQ1).